A 426-amino-acid chain; its full sequence is Trigger factor (426 aa).

The PPIase FKBP-type domain maps to 160–240; the sequence is GDTVIGDVTK…IKEVKHLELP (81 aa).

It belongs to the FKBP-type PPIase family. Tig subfamily.

It localises to the cytoplasm. It carries out the reaction [protein]-peptidylproline (omega=180) = [protein]-peptidylproline (omega=0). Involved in protein export. Acts as a chaperone by maintaining the newly synthesized protein in an open conformation. Functions as a peptidyl-prolyl cis-trans isomerase. This is Trigger factor from Chlorobaculum tepidum (strain ATCC 49652 / DSM 12025 / NBRC 103806 / TLS) (Chlorobium tepidum).